The chain runs to 37 residues: Cytochrome b6-f complex subunit 5 (37 aa).

Residues 5-25 (LLSGIVLGLVPVTIAGLFVTA) form a helical membrane-spanning segment.

It belongs to the PetG family. The 4 large subunits of the cytochrome b6-f complex are cytochrome b6, subunit IV (17 kDa polypeptide, PetD), cytochrome f and the Rieske protein, while the 4 small subunits are PetG, PetL, PetM and PetN. The complex functions as a dimer.

The protein localises to the plastid. Its subcellular location is the chloroplast thylakoid membrane. Functionally, component of the cytochrome b6-f complex, which mediates electron transfer between photosystem II (PSII) and photosystem I (PSI), cyclic electron flow around PSI, and state transitions. PetG is required for either the stability or assembly of the cytochrome b6-f complex. The chain is Cytochrome b6-f complex subunit 5 from Stigeoclonium helveticum (Green alga).